A 603-amino-acid polypeptide reads, in one-letter code: Golgin subfamily A member 8B (603 aa).

4 disordered regions span residues 1–82 (MAEE…NSRS), 95–125 (LKQQ…ELEG), 398–419 (TSAE…ESSG), and 460–492 (PGDS…GAAG). Residues 46-66 (AASGGCHSSEASSSASSSLHA) are compositionally biased toward low complexity. Over residues 69–82 (SPCQEQAAVLNSRS) the composition is skewed to polar residues. Coiled coils occupy residues 82–173 (SIKI…GELE) and 212–440 (LKGH…LELG). The segment covering 100–124 (KQVEHQLEEEKKANNEKQKAERELE) has biased composition (basic and acidic residues). Residues 469–482 (PGGGHHQAGPGQGG) show a composition bias toward gly residues. A golgi-targeting domain region spans residues 491 to 603 (AGDGVAACGS…CWAWLPRRRR (113 aa)).

Belongs to the GOLGA8 family. In terms of tissue distribution, highly expressed in brain, heart and kidney. Detected at lower levels in liver, thymus, spleen, lung and peripheral blood leukocytes.

It localises to the golgi apparatus. The protein resides in the golgi stack membrane. Functionally, may be involved in maintaining Golgi structure. This Homo sapiens (Human) protein is Golgin subfamily A member 8B (GOLGA8B).